The primary structure comprises 471 residues: Siroheme synthase (471 aa).

The tract at residues 1–203 (MEYLPLFADL…GRLEQAEQAL (203 aa)) is precorrin-2 dehydrogenase /sirohydrochlorin ferrochelatase. Residues 22–23 (EV) and 43–44 (RA) contribute to the NAD(+) site. A Phosphoserine modification is found at Ser-128. Residues 215–471 (GEVALVGAGP…QKRASVVNLA (257 aa)) form a uroporphyrinogen-III C-methyltransferase region. Pro-224 serves as a coordination point for S-adenosyl-L-methionine. Catalysis depends on Asp-247, which acts as the Proton acceptor. The active-site Proton donor is Lys-269. S-adenosyl-L-methionine-binding positions include 300 to 302 (GGD), Ile-305, 330 to 331 (TA), Met-382, and Gly-411.

The protein in the N-terminal section; belongs to the precorrin-2 dehydrogenase / sirohydrochlorin ferrochelatase family. In the C-terminal section; belongs to the precorrin methyltransferase family.

It carries out the reaction uroporphyrinogen III + 2 S-adenosyl-L-methionine = precorrin-2 + 2 S-adenosyl-L-homocysteine + H(+). It catalyses the reaction precorrin-2 + NAD(+) = sirohydrochlorin + NADH + 2 H(+). The enzyme catalyses siroheme + 2 H(+) = sirohydrochlorin + Fe(2+). It participates in cofactor biosynthesis; adenosylcobalamin biosynthesis; precorrin-2 from uroporphyrinogen III: step 1/1. It functions in the pathway cofactor biosynthesis; adenosylcobalamin biosynthesis; sirohydrochlorin from precorrin-2: step 1/1. The protein operates within porphyrin-containing compound metabolism; siroheme biosynthesis; precorrin-2 from uroporphyrinogen III: step 1/1. Its pathway is porphyrin-containing compound metabolism; siroheme biosynthesis; siroheme from sirohydrochlorin: step 1/1. It participates in porphyrin-containing compound metabolism; siroheme biosynthesis; sirohydrochlorin from precorrin-2: step 1/1. Its function is as follows. Multifunctional enzyme that catalyzes the SAM-dependent methylations of uroporphyrinogen III at position C-2 and C-7 to form precorrin-2 via precorrin-1. Then it catalyzes the NAD-dependent ring dehydrogenation of precorrin-2 to yield sirohydrochlorin. Finally, it catalyzes the ferrochelation of sirohydrochlorin to yield siroheme. The sequence is that of Siroheme synthase from Sodalis glossinidius (strain morsitans).